Reading from the N-terminus, the 236-residue chain is Alpha-acetolactate decarboxylase (236 aa).

The protein belongs to the alpha-acetolactate decarboxylase family.

The catalysed reaction is (2S)-2-acetolactate + H(+) = (R)-acetoin + CO2. The protein operates within polyol metabolism; (R,R)-butane-2,3-diol biosynthesis; (R,R)-butane-2,3-diol from pyruvate: step 2/3. Converts acetolactate into acetoin. In Lactococcus lactis subsp. lactis (strain IL1403) (Streptococcus lactis), this protein is Alpha-acetolactate decarboxylase (aldB).